Reading from the N-terminus, the 145-residue chain is Large ribosomal subunit protein uL16 (145 aa).

The protein belongs to the universal ribosomal protein uL16 family. In terms of assembly, part of the 50S ribosomal subunit.

Its function is as follows. Binds 23S rRNA and is also seen to make contacts with the A and possibly P site tRNAs. In Exiguobacterium sibiricum (strain DSM 17290 / CCUG 55495 / CIP 109462 / JCM 13490 / 255-15), this protein is Large ribosomal subunit protein uL16.